The primary structure comprises 1047 residues: uncharacterized protein (1047 aa).

Lys17 carries the N6-acetyllysine modification. 2 disordered regions span residues 172–208 (PPCS…GSFS) and 236–283 (RNSK…PQAL). Phosphoserine is present on Ser208. Over residues 237–254 (NSKQAMSEGPSSPWTQLA) the composition is skewed to polar residues. A compositionally biased stretch (pro residues) spans 268–283 (HYPPPHHPPPHPPQAL). Phosphoserine occurs at positions 299 and 391. A Phosphothreonine modification is found at Thr397. 7 disordered regions span residues 448 to 469 (EKLQ…DSPV), 482 to 504 (ECQS…PVID), 519 to 567 (PAPE…LRGS), 668 to 690 (PSTP…GPIG), 714 to 763 (VAVA…GDSL), 931 to 1004 (EAGA…TLKA), and 1021 to 1047 (PTWG…SHHL). Phosphoserine is present on residues Ser455, Ser496, and Ser497. 2 stretches are compositionally biased toward low complexity: residues 729 to 741 (PARA…ARDP) and 751 to 762 (PAPASTSAPGDS). Phosphoserine is present on residues Ser936, Ser956, Ser988, and Ser996. Residues 978–996 (AAAGEESCGASPTPATSAS) show a composition bias toward low complexity.

This is an uncharacterized protein from Homo sapiens (Human).